The chain runs to 253 residues: Trypsin delta (253 aa).

Positions 1–22 are cleaved as a signal peptide; the sequence is MLKFVILLSAVACALGGTIPEG. A propeptide spans 23 to 30 (activation peptide); that stretch reads LLPQLDGR. In terms of domain architecture, Peptidase S1 spans 31-253; the sequence is IVGGTATTIS…DLRAWVVRNA (223 aa). Cys56 and Cys72 are disulfide-bonded. Residues His71 and Asp116 each act as charge relay system in the active site. Disulfide bonds link Cys180–Cys197 and Cys206–Cys230. Residue Ser210 is the Charge relay system of the active site.

This sequence belongs to the peptidase S1 family.

The protein resides in the secreted. It is found in the extracellular space. It carries out the reaction Preferential cleavage: Arg-|-Xaa, Lys-|-Xaa.. This Drosophila erecta (Fruit fly) protein is Trypsin delta.